A 354-amino-acid polypeptide reads, in one-letter code: NADH-quinone oxidoreductase subunit H (354 aa).

8 helical membrane-spanning segments follow: residues 23-43, 91-111, 124-144, 162-182, 203-223, 250-270, 291-311, and 330-350; these read LVRA…LILW, YIIA…VIPF, LLYV…AGWA, ISYE…TGSL, ILSW…ISGV, GMAF…ISAL, IPGF…FIWL, and IFIP…VSPW.

It belongs to the complex I subunit 1 family. In terms of assembly, NDH-1 is composed of 14 different subunits. Subunits NuoA, H, J, K, L, M, N constitute the membrane sector of the complex.

It localises to the cell inner membrane. The catalysed reaction is a quinone + NADH + 5 H(+)(in) = a quinol + NAD(+) + 4 H(+)(out). NDH-1 shuttles electrons from NADH, via FMN and iron-sulfur (Fe-S) centers, to quinones in the respiratory chain. The immediate electron acceptor for the enzyme in this species is believed to be ubiquinone. Couples the redox reaction to proton translocation (for every two electrons transferred, four hydrogen ions are translocated across the cytoplasmic membrane), and thus conserves the redox energy in a proton gradient. This subunit may bind ubiquinone. This Ralstonia pickettii (strain 12J) protein is NADH-quinone oxidoreductase subunit H.